A 204-amino-acid polypeptide reads, in one-letter code: Small ribosomal subunit protein uS4 (204 aa).

The tract at residues Met1–Ser46 is disordered. The 64-residue stretch at Arg94–Gln157 folds into the S4 RNA-binding domain.

The protein belongs to the universal ribosomal protein uS4 family. In terms of assembly, part of the 30S ribosomal subunit. Contacts protein S5. The interaction surface between S4 and S5 is involved in control of translational fidelity.

Its function is as follows. One of the primary rRNA binding proteins, it binds directly to 16S rRNA where it nucleates assembly of the body of the 30S subunit. With S5 and S12 plays an important role in translational accuracy. This is Small ribosomal subunit protein uS4 from Zymomonas mobilis subsp. mobilis (strain ATCC 31821 / ZM4 / CP4).